A 429-amino-acid chain; its full sequence is MSYSRSVYSSSSVVGGSPYRSLSSAPRFIPSSSAASVHAGAGGSGARISVSRVSSVGSGFGGGYSGVSNVNLIGGGQNEKETMQDLNDRLASYLERVRSLEAANKKLEVQIRQHTEKKGPSKDWSPYYKTIEDLRKQVFDSTLENSQLVLQIDNARLAADDFRVKYEAEMAIRMSVEGDITGLRKLIDDTNVSRMNLENEIESLKEELIFLKKNHQDDVTELQAQVARSAVTVEVDAPKSQDLGKIMTELRAQYDGLAQKNRDDVEKWYQSKVDEHTVQVNLDTEALHSAKSSVTDLRRTVQSLEIELESLRNQKASLEGTLHDTEARYAMELEMLGGTAMAMEAELVQVRSDCQRQQQEYQALLNTKMKLEAEIHTYRRLLEGDGSFDLQDAVPTVTTQTVKKVITTTQRIVDGKVVSESNDTEVLKS.

The segment at 2 to 78 is head; that stretch reads SYSRSVYSSS…NVNLIGGGQN (77 aa). Residues 79–114 form a coil 1A region; sequence EKETMQDLNDRLASYLERVRSLEAANKKLEVQIRQH. The IF rod domain maps to 79 to 389; it reads EKETMQDLND…RLLEGDGSFD (311 aa). The tract at residues 115–130 is linker 1; it reads TEKKGPSKDWSPYYKT. A coil 1B region spans residues 131-222; the sequence is IEDLRKQVFD…KNHQDDVTEL (92 aa). The tract at residues 223–246 is linker 12; sequence QAQVARSAVTVEVDAPKSQDLGKI. The tract at residues 247–385 is coil 2; sequence MTELRAQYDG…HTYRRLLEGD (139 aa). The segment at 386–429 is tail; sequence GSFDLQDAVPTVTTQTVKKVITTTQRIVDGKVVSESNDTEVLKS.

Belongs to the intermediate filament family. As to quaternary structure, heterotetramer of two type I and two type II keratins. Keratin-18 associates with keratin-8. Phosphorylated. Post-translationally, proteolytically cleaved by caspases during epithelial cell apoptosis.

In terms of biological role, when phosphorylated, plays a role in filament reorganization. The protein is Keratin, type I cytoskeletal 18 of Xenopus tropicalis (Western clawed frog).